The chain runs to 345 residues: Dihydroorotase (345 aa).

The Zn(2+) site is built by His-13 and His-15. Residues His-15–Arg-17 and Asn-41 contribute to the substrate site. Positions 99, 136, 174, and 247 each coordinate Zn(2+). Residue Lys-99 is modified to N6-carboxylysine. A substrate-binding site is contributed by His-136. The active site involves Asp-247. Positions 251 and 263 each coordinate substrate.

This sequence belongs to the metallo-dependent hydrolases superfamily. DHOase family. Class II DHOase subfamily. In terms of assembly, homodimer. Zn(2+) is required as a cofactor.

The catalysed reaction is (S)-dihydroorotate + H2O = N-carbamoyl-L-aspartate + H(+). The protein operates within pyrimidine metabolism; UMP biosynthesis via de novo pathway; (S)-dihydroorotate from bicarbonate: step 3/3. Its function is as follows. Catalyzes the reversible cyclization of carbamoyl aspartate to dihydroorotate. The sequence is that of Dihydroorotase from Halorhodospira halophila (strain DSM 244 / SL1) (Ectothiorhodospira halophila (strain DSM 244 / SL1)).